The chain runs to 387 residues: TPR repeat-containing protein SYNPCC7002_A0425 (387 aa).

9 TPR repeats span residues 63–96 (LNALLEQGNEQLTNRNFAQAVQHYRQALTLEANN), 97–130 (ARIHGALGYALSQLGNYSEAVTAYRRATELEDDN), 132–164 (EFFNALGFNLAQSGDNRSAINAYQRATQLQPNN), 166–198 (AYSLGLATVQFRAGDYDQALVAYRKVLAKDSNN), 200–232 (MALQNSLTSLLQLGRNQEAAVLFPDLLRQRPND), 233–266 (AELRIKAAVTWFGLNDRDQAIAFLEEARRLSTRD), 267–300 (SAMQIRVGKIYETQNLLPQAIAAYEQASFVDPQS), 302–334 (EAFALYGSAAMKTEDYINAIIAYRALTELSPTD), and 336–368 (AAFYNFAVALQGRRRSREALEALEMARDLYQQR).

In Picosynechococcus sp. (strain ATCC 27264 / PCC 7002 / PR-6) (Agmenellum quadruplicatum), this protein is TPR repeat-containing protein SYNPCC7002_A0425.